A 287-amino-acid polypeptide reads, in one-letter code: 3-hydroxyanthranilate 3,4-dioxygenase (287 aa).

The tract at residues 1 to 163 is domain A (catalytic); it reads MTNQSLHVNI…SKENETGKPD (163 aa). Arginine 46 is a binding site for O2. Residues histidine 50, glutamate 56, and histidine 94 each coordinate Fe cation. Glutamate 56 serves as a coordination point for substrate. Substrate-binding residues include arginine 98 and glutamate 108. The interval 164–180 is linker; it reads PANPIKPAPYPLNTMNV. Residues 181-287 form a domain B region; that stretch reads MTPFSFREWV…AQDPDRKRPY (107 aa).

Belongs to the 3-HAO family. In terms of assembly, monomer. Fe(2+) is required as a cofactor.

Its subcellular location is the cytoplasm. The protein localises to the cytosol. It catalyses the reaction 3-hydroxyanthranilate + O2 = (2Z,4Z)-2-amino-3-carboxymuconate 6-semialdehyde. Its pathway is cofactor biosynthesis; NAD(+) biosynthesis; quinolinate from L-kynurenine: step 3/3. Catalyzes the oxidative ring opening of 3-hydroxyanthranilate to 2-amino-3-carboxymuconate semialdehyde, which spontaneously cyclizes to quinolinate. The sequence is that of 3-hydroxyanthranilate 3,4-dioxygenase (haao) from Danio rerio (Zebrafish).